Here is a 350-residue protein sequence, read N- to C-terminus: MRKIIHIDMDCFYAAVEMRDNPALREVPLAIGGSADRRGVISTCNYVARRFGVRSAMPSALARKLCPPLVLIPGRMAVYKEVSRLLRAIFLRYTEQVEPLSLDEAYLDVTMSPCCGGSATLMAREIRAAINTELGLTASAGVAPNKFLAKLASEQRKPDGLFVIRPQEVDEFVRQLPLGKLPGIGRKTADRLESLGLYSCEDARQLGNEELIARFGKLGEMLAGRIWGHDEQPVQAQRVRKTIGVETTLASDVLDEAACWQVLRQLIPELEQRFSVSHGKEQLMGQGIKLKFADFQQTTVYRRGGYQPERFHDLLHEGLLRAQGKPIRLLGLVVGLPAAGEVNQLALDLA.

Residues 4–185 (IIHIDMDCFY…LPLGKLPGIG (182 aa)) enclose the UmuC domain. The Mg(2+) site is built by Asp8 and Asp103. Glu104 is an active-site residue.

This sequence belongs to the DNA polymerase type-Y family. In terms of assembly, monomer. Mg(2+) serves as cofactor.

It localises to the cytoplasm. It carries out the reaction DNA(n) + a 2'-deoxyribonucleoside 5'-triphosphate = DNA(n+1) + diphosphate. Poorly processive, error-prone DNA polymerase involved in untargeted mutagenesis. Copies undamaged DNA at stalled replication forks, which arise in vivo from mismatched or misaligned primer ends. These misaligned primers can be extended by PolIV. Exhibits no 3'-5' exonuclease (proofreading) activity. May be involved in translesional synthesis, in conjunction with the beta clamp from PolIII. The polypeptide is DNA polymerase IV (Aeromonas hydrophila subsp. hydrophila (strain ATCC 7966 / DSM 30187 / BCRC 13018 / CCUG 14551 / JCM 1027 / KCTC 2358 / NCIMB 9240 / NCTC 8049)).